The chain runs to 1755 residues: MESQQLSNYPHISHGSACASVTSKEVHTNQDPLDVSASKIQEYDKASTKANSQQTTTPASSAVPENPHHASPQPASVPPPQNGPYPQQCMMTQNQANPSGWSFYGHPSMIPYTPYQMSPMYFPPGPQSQFPQYPSSVGTPLSTPSPESGNTFTDSSSADSDMTSTKKYVRPPPMLTSPNDFPNWVKTYIKFLQNSNLGGIIPTVNGKPVRQITDDELTFLYNTFQIFAPSQFLPTWVKDILSVDYTDIMKILSKSIEKMQSDTQEANDIVTLANLQYNGSTPADAFETKVTNIIDRLNNNGIHINNKVACQLIMRGLSGEYKFLRYTRHRHLNMTVAELFLDIHAIYEEQQGSRNSKPNYRRNPSDEKNDSRSYTNTTKPKVIARNPQKTNNSKSKTARAHNVSTSNNSPSTDNDSISKSTTEPIQLNNKHDLHLGQKLTESTVNHTNHSDDELPGHLLLDSGASRTLIRSAHHIHSASSNPDINVVDAQKRNIPINAIGDLQFHFQDNTKTSIKVLHTPNIAYDLLSLNELAAVDITACFTKNVLERSDGTVLAPIVKYGDFYWVSKKYLLPSNISVPTINNVHTSESTRKYPYPFIHRMLAHANAQTIRYSLKNNTITYFNESDVDWSSAIDYQCPDCLIGKSTKHRHIKGSRLKYQNSYEPFQYLHTDIFGPVHNLPKSAPSYFISFTDETTKFRWVYPLHDRREDSILDVFTTILAFIKNQFQASVLVIQMDRGSEYTNRTLHKFLEKNGITPCYTTTADSRAHGVAERLNRTLLDDCRTQLQCSGLPNHLWFSAIEFSTIVRNSLASPKSKKSARQHAGLAGLDISTLLPFGQPVIVNDHNPNSKIHPRGIPGYALHPSRNSYGYIIYLPSLKKTVDTTNYVILQGKESRLDQFNYDALTFDEDLNRLTASYQSFIASNEIQQSDDLNIESDHDFQSDIELHPEQPRNVLSKAVSPTDSTPPSTHTEDSKRVSKTNIRAPREVDPNISESNILPSKKRSSTPQISNIESTGSGGMHKLNVPLLAPMSQSNTHESSHASKSKDFRHSDSYSENETNHTNVPISSTGGTNNKTVPQISDQETEKRIIHRSPSIDASPPENNSSHNIVPIKTPTTVSEQNTEESIIADLPLPDLPPESPTEFPDPFKELPPINSRQTNSSLGGIGDSNAYTTINSKKRSLEDNETEIKVSRDTWNTKNMRSLEPPRSKKRIHLIAAVKAVKSIKPIRTTLRYDEAITYNKDIKEKEKYIQAYHKEVNQLLKMKTWDTDRYYDRKEIDPKRVINSMFIFNRKRDGTHKARFVARGDIQHPDTYDPGMQSNTVHHYALMTSLSLALDNNYYITQLDISSAYLYADIKEELYIRPPPHLGMNDKLIRLKKSLYGLKQSGANWYETIKSYLIKQCGMEEVRGWSCVFKNSQVTICLFVDDMILFSKDLNANKKIITTLKKQYDTKIINLGESDNEIQYDILGLEIKYQRGKYMKLGMENSLTEKIPKLNVPLNPKGRKLSAPGQPGLYIDQQELELEEDDYKMKVHEMQKLIGLASYVGYKFRFDLLYYINTLAQHILFPSKQVLDMTYELIQFIWNTRDKQLIWHKSKPVKPTNKLVVISDASYGNQPYYKSQIGNIYLLNGKVIGGKSTKASLTCTSTTEAEIHAISESVPLLNNLSHLVQELNKKPITKGLLTDSKSTISIIISNNEEKFRNRFFGTKAMRLRDEVSGNHLHVCYIETKKNIADVMTKPLPIKTFKLLTNKWIH.

3 stretches are compositionally biased toward polar residues: residues 1–10, 48–60, and 127–152; these read MESQQLSNYP, TKAN…TPAS, and QSQF…GNTF. Disordered stretches follow at residues 1–93, 126–173, and 352–421; these read MESQ…MMTQ, PQSQ…RPPP, and GSRN…SKST. The segment covering 153–165 has biased composition (low complexity); the sequence is TDSSSADSDMTST. Residues 299–401 form an RNA-binding region; that stretch reads NNGIHINNKV…NSKSKTARAH (103 aa). Over residues 402-418 the composition is skewed to low complexity; it reads NVSTSNNSPSTDNDSIS. A Phosphoserine modification is found at S416. Residue D461 is the For protease activity; shared with dimeric partner of the active site. Positions 583-640 are integrase-type zinc finger-like; the sequence is NVHTSESTRKYPYPFIHRMLAHANAQTIRYSLKNNTITYFNESDVDWSSAIDYQCPDC. The region spanning 660 to 835 is the Integrase catalytic domain; it reads NSYEPFQYLH…AGLDISTLLP (176 aa). Positions 671 and 736 each coordinate Mg(2+). Disordered stretches follow at residues 956 to 1087, 1092 to 1111, and 1130 to 1186; these read SKAV…ETEK, RSPS…NIVP, and DLPL…EDNE. Positions 960-969 are enriched in low complexity; it reads SPTDSTPPST. Positions 1005–1015 are enriched in polar residues; the sequence is STPQISNIEST. Residues 1038 to 1053 are compositionally biased toward basic and acidic residues; that stretch reads ESSHASKSKDFRHSDS. Polar residues-rich tracts occupy residues 1054 to 1082 and 1101 to 1111; these read YSEN…QISD and PENNSSHNIVP. Residues 1178-1212 carry the Bipartite nuclear localization signal motif; it reads KKRSLEDNETEIKVSRDTWNTKNMRSLEPPRSKKR. The 139-residue stretch at 1338–1476 folds into the Reverse transcriptase Ty1/copia-type domain; it reads NNYYITQLDI…DILGLEIKYQ (139 aa). The Mg(2+) site is built by D1346, D1427, D1428, D1610, E1652, and D1685. The region spanning 1610–1752 is the RNase H Ty1/copia-type domain; that stretch reads DASYGNQPYY…IKTFKLLTNK (143 aa).

The capsid protein forms a homotrimer, from which the VLPs are assembled. The protease is a homodimer, whose active site consists of two apposed aspartic acid residues. Post-translationally, initially, virus-like particles (VLPs) are composed of the structural unprocessed proteins Gag and Gag-Pol, and also contain the host initiator methionine tRNA (tRNA(i)-Met) which serves as a primer for minus-strand DNA synthesis, and a dimer of genomic Ty RNA. Processing of the polyproteins occurs within the particle and proceeds by an ordered pathway, called maturation. First, the protease (PR) is released by autocatalytic cleavage of the Gag-Pol polyprotein yielding capsid protein p45 and a Pol-p154 precursor protein. This cleavage is a prerequisite for subsequent processing of Pol-p154 at the remaining sites to release the mature structural and catalytic proteins. Maturation takes place prior to the RT reaction and is required to produce transposition-competent VLPs.

The protein localises to the cytoplasm. The protein resides in the nucleus. The catalysed reaction is DNA(n) + a 2'-deoxyribonucleoside 5'-triphosphate = DNA(n+1) + diphosphate. It carries out the reaction Endonucleolytic cleavage to 5'-phosphomonoester.. Capsid protein (CA) is the structural component of the virus-like particle (VLP), forming the shell that encapsulates the retrotransposons dimeric RNA genome. The particles are assembled from trimer-clustered units and there are holes in the capsid shells that allow for the diffusion of macromolecules. CA also has nucleocapsid-like chaperone activity, promoting primer tRNA(i)-Met annealing to the multipartite primer-binding site (PBS), dimerization of Ty1 RNA and initiation of reverse transcription. In terms of biological role, the aspartyl protease (PR) mediates the proteolytic cleavages of the Gag and Gag-Pol polyproteins after assembly of the VLP. Functionally, reverse transcriptase/ribonuclease H (RT) is a multifunctional enzyme that catalyzes the conversion of the retro-elements RNA genome into dsDNA within the VLP. The enzyme displays a DNA polymerase activity that can copy either DNA or RNA templates, and a ribonuclease H (RNase H) activity that cleaves the RNA strand of RNA-DNA heteroduplexes during plus-strand synthesis and hydrolyzes RNA primers. The conversion leads to a linear dsDNA copy of the retrotransposon that includes long terminal repeats (LTRs) at both ends. Its function is as follows. Integrase (IN) targets the VLP to the nucleus, where a subparticle preintegration complex (PIC) containing at least integrase and the newly synthesized dsDNA copy of the retrotransposon must transit the nuclear membrane. Once in the nucleus, integrase performs the integration of the dsDNA into the host genome. The chain is Transposon Ty1-MR2 Gag-Pol polyprotein (TY1B-MR2) from Saccharomyces cerevisiae (strain ATCC 204508 / S288c) (Baker's yeast).